The chain runs to 382 residues: F-box/kelch-repeat protein KIB1 (382 aa).

The F-box domain occupies 22-69; it reads SKHSILAVDLVRLILERLSFVDFHRARCVSSIWYIASKTVIGVTNPTT. Kelch repeat units follow at residues 73–117, 159–209, and 259–306; these read ILFP…ASSG, VLWV…FKEN, and IVAK…ITVE.

Part of a SCF (SKP1-cullin-F-box) protein ligase complex. Binds directly to several GSK3 family proteins such as SKP1A/ASK1, ASK1/SK11, ASK3/SK12, ASK5/SK13, ASK7/BIN2/SK21, ASK9/SK22 and ASK6/SK23. Interacts with ASK7/BIN2/SK21 in a brassinosteroid (BR)-dependent manner. In terms of tissue distribution, expressed in seedlings, leaves, stems, flower buds and flowers.

It localises to the cytoplasm. Its subcellular location is the nucleus. The protein resides in the nucleolus. In terms of biological role, component of SCF(ASK-cullin-F-box) E3 ubiquitin ligase complexes, which may mediate the ubiquitination and subsequent proteasomal degradation of target proteins. Required for brassinosteroid (BR) signal transduction. Mediates ASK7/BIN2/SK21 inactivation both by competing with substrate binding (e.g. BZR1) and by promoting its ubiquitination and subsequent proteasomal degradation. The polypeptide is F-box/kelch-repeat protein KIB1 (Arabidopsis thaliana (Mouse-ear cress)).